Reading from the N-terminus, the 128-residue chain is Gastrotropin (128 aa).

At alanine 2 the chain carries N-acetylalanine.

Belongs to the calycin superfamily. Fatty-acid binding protein (FABP) family.

It localises to the cytoplasm. The protein resides in the membrane. Its function is as follows. Binds to bile acids and is involved in enterohepatic bile acid metabolism. Required for efficient apical to basolateral transport of conjugated bile acids in ileal enterocytes. Stimulates gastric acid and pepsinogen secretion. This chain is Gastrotropin (FABP6), found in Bos taurus (Bovine).